Reading from the N-terminus, the 563-residue chain is PTS system fructose-specific EIIB'BC component (563 aa).

2 consecutive PTS EIIB type-2 domains span residues 1–85 (MKTL…KGHA) and 104–201 (KRVV…KAVA). The Phosphocysteine intermediate; for EIIB activity role is filled by cysteine 112. Cysteine 112 carries the post-translational modification Phosphocysteine; by EIIA. One can recognise a PTS EIIC type-2 domain in the interval 226–561 (AYRHLLTGVS…KRPEVDAVAK (336 aa)). 9 consecutive transmembrane segments (helical) span residues 236-256 (YMLPMVVAGGLCIALSFAFGI), 274-294 (GGSAFALMVPVLAGYIAFSIA), 304-324 (IGGMLAVSTGSGFIGGIIAGF), 349-369 (ILIIPLISSLVVGLAMIYLIG), 382-402 (WLQTMGTANAVLLGAILGGMM), 430-450 (MAAIMAAGMVPPLAMGLATMV), 463-483 (GKAALVLGLCFISEGAIPFAA), 489-509 (VLPCCIVGGALTGAISMAIGA), and 518-538 (LFVLLIPGAITPVLGYLVAII).

It is found in the cell inner membrane. It carries out the reaction D-fructose(out) + N(pros)-phospho-L-histidyl-[protein] = D-fructose 1-phosphate(in) + L-histidyl-[protein]. Functionally, the phosphoenolpyruvate-dependent sugar phosphotransferase system (sugar PTS), a major carbohydrate active transport system, catalyzes the phosphorylation of incoming sugar substrates concomitantly with their translocation across the cell membrane. The enzyme II FruAB PTS system is involved in fructose transport. This Escherichia coli (strain K12) protein is PTS system fructose-specific EIIB'BC component.